Reading from the N-terminus, the 41-residue chain is Large ribosomal subunit protein bL36 (41 aa).

It belongs to the bacterial ribosomal protein bL36 family.

The sequence is that of Large ribosomal subunit protein bL36 from Xylella fastidiosa (strain M23).